The chain runs to 390 residues: Protein-glutamate methylesterase/protein-glutamine glutaminase (390 aa).

The Response regulatory domain occupies 4 to 121 (RALVVDDSGF…SGDMEQVKRQ (118 aa)). At aspartate 55 the chain carries 4-aspartylphosphate. The segment at 130–198 (GGGRGAPAGR…AAPAPERGQR (69 aa)) is disordered. Low complexity-rich tracts occupy residues 136 to 148 (PAGR…APVD) and 179 to 193 (EAPV…APAP). Residues 201–390 (PGALRLVVIG…QVGEELAKLR (190 aa)) enclose the CheB-type methylesterase domain. Catalysis depends on residues serine 212, histidine 239, and aspartate 335.

Belongs to the CheB family. Post-translationally, phosphorylated by CheA. Phosphorylation of the N-terminal regulatory domain activates the methylesterase activity.

The protein localises to the cytoplasm. The enzyme catalyses [protein]-L-glutamate 5-O-methyl ester + H2O = L-glutamyl-[protein] + methanol + H(+). It catalyses the reaction L-glutaminyl-[protein] + H2O = L-glutamyl-[protein] + NH4(+). In terms of biological role, involved in chemotaxis. Part of a chemotaxis signal transduction system that modulates chemotaxis in response to various stimuli. Catalyzes the demethylation of specific methylglutamate residues introduced into the chemoreceptors (methyl-accepting chemotaxis proteins or MCP) by CheR. Also mediates the irreversible deamidation of specific glutamine residues to glutamic acid. In Alkalilimnicola ehrlichii (strain ATCC BAA-1101 / DSM 17681 / MLHE-1), this protein is Protein-glutamate methylesterase/protein-glutamine glutaminase.